We begin with the raw amino-acid sequence, 439 residues long: Large ribosomal subunit protein mL65 (439 aa).

This sequence belongs to the mitochondrion-specific ribosomal protein mL65 family. Component of the mitochondrial large ribosomal subunit (mt-LSU). Mature mammalian 55S mitochondrial ribosomes consist of a small (28S) and a large (39S) subunit. The 28S small subunit contains a 12S ribosomal RNA (12S mt-rRNA) and 30 different proteins. The 39S large subunit contains a 16S rRNA (16S mt-rRNA), a copy of mitochondrial valine transfer RNA (mt-tRNA(Val)), which plays an integral structural role, and 52 different proteins. mL65 forms a heterodimer with mL37. Heart, skeletal muscle, kidney and liver. Lower expression in placenta and peripheral blood leukocytes.

Its subcellular location is the mitochondrion. This chain is Large ribosomal subunit protein mL65 (MRPS30), found in Homo sapiens (Human).